A 347-amino-acid chain; its full sequence is Eukaryotic translation initiation factor 3 subunit H (347 aa).

Positions 1–142 constitute an MPN domain; the sequence is MKIMKHCSQT…LRAFRLSPRF (142 aa).

This sequence belongs to the eIF-3 subunit H family. In terms of assembly, component of the eukaryotic translation initiation factor 3 (eIF-3) complex.

The protein resides in the cytoplasm. Component of the eukaryotic translation initiation factor 3 (eIF-3) complex, which is involved in protein synthesis of a specialized repertoire of mRNAs and, together with other initiation factors, stimulates binding of mRNA and methionyl-tRNAi to the 40S ribosome. The eIF-3 complex specifically targets and initiates translation of a subset of mRNAs involved in cell proliferation. This is Eukaryotic translation initiation factor 3 subunit H from Neosartorya fischeri (strain ATCC 1020 / DSM 3700 / CBS 544.65 / FGSC A1164 / JCM 1740 / NRRL 181 / WB 181) (Aspergillus fischerianus).